Consider the following 336-residue polypeptide: Adenylate isopentenyltransferase 3, chloroplastic (336 aa).

A chloroplast-targeting transit peptide spans 1-55 (MIMKISMAMCKQPLPPSPTLDFPPARFGPNMLTLNPYGPKDKVVVIMGATGTGKS). An ATP-binding site is contributed by 48–55 (GATGTGKS). Cys333 is modified (cysteine methyl ester). Cys333 is lipidated: S-farnesyl cysteine. Residues 334–336 (LVA) constitute a propeptide, removed in mature form.

Belongs to the IPP transferase family. Post-translationally, farnesylated. In terms of tissue distribution, expressed the phloem companion cells.

It localises to the plastid. The protein localises to the chloroplast. Its subcellular location is the nucleus membrane. It is found in the cytoplasm. It carries out the reaction dimethylallyl diphosphate + ADP = N(6)-(dimethylallyl)adenosine 5'-diphosphate + diphosphate. It catalyses the reaction dimethylallyl diphosphate + ATP = N(6)-(dimethylallyl)adenosine 5'-triphosphate + diphosphate. Functionally, involved in cytokinin biosynthesis. Catalyzes the transfer of an isopentenyl group from dimethylallyl diphosphate (DMAPP) to ATP and ADP. In Arabidopsis thaliana (Mouse-ear cress), this protein is Adenylate isopentenyltransferase 3, chloroplastic (IPT3).